The chain runs to 741 residues: G2 and S phase-expressed protein 1 (741 aa).

Ser-73 bears the Phosphoserine mark. Disordered stretches follow at residues 101 to 120 (EVAQ…ETFV), 131 to 428 (EKEQ…KTVS), and 450 to 512 (FKVP…STRR). The span at 106–120 (ATPQNPVNQGKETFV) shows a compositional bias: polar residues. Positions 131-147 (EKEQKRDRSPMSLKRET) are enriched in basic and acidic residues. Residues Ser-139, Ser-153, Ser-191, and Ser-245 each carry the phosphoserine modification. Residues 173 to 209 (SPVSAGPAQTQSNQGLPCSSQPLPRESSTSQPPSQAG) are compositionally biased toward polar residues. Polar residues predominate over residues 246–261 (IQRTKLVNEKGSQSDV). Positions 310-321 (SSTSGSASSLES) are enriched in low complexity. Position 311 is a phosphoserine (Ser-311). Residues 337–355 (QRSSIPASGSQRRTSTSKS) are compositionally biased toward polar residues. Residues 360–372 (PAASRQALPAAPA) are compositionally biased toward low complexity. The segment covering 398 to 408 (SPLTQQPQTPE) has biased composition (polar residues). Phosphoserine is present on Ser-460. Position 465 is a phosphothreonine (Thr-465). A phosphoserine mark is found at Ser-476, Ser-493, Ser-509, and Ser-514. Residues 478-497 (TPASRVVSSTPVRRSSGTTP) are compositionally biased toward low complexity. At Thr-518 the chain carries Phosphothreonine. Phosphoserine occurs at positions 521, 541, 582, and 599. The interval 550–640 (LSSEPRRRST…VHGGGCSHTP (91 aa)) is disordered. Over residues 578 to 593 (QGLSSDESSSPPSSVP) the composition is skewed to low complexity. The residue at position 696 (Thr-696) is a Phosphothreonine. Phosphoserine is present on residues Ser-720, Ser-726, and Ser-736.

Post-translationally, phosphorylated in mitosis.

Its subcellular location is the cytoplasm. It localises to the cytoskeleton. May be involved in p53-induced cell cycle arrest in G2/M phase by interfering with microtubule rearrangements that are required to enter mitosis. Overexpression delays G2/M phase progression. This is G2 and S phase-expressed protein 1 (Gtse1) from Mus musculus (Mouse).